The following is a 309-amino-acid chain: Protein FdhE (309 aa).

This sequence belongs to the FdhE family.

The protein resides in the cytoplasm. In terms of biological role, necessary for formate dehydrogenase activity. The chain is Protein FdhE from Salmonella arizonae (strain ATCC BAA-731 / CDC346-86 / RSK2980).